The following is a 178-amino-acid chain: Putative peroxiredoxin in rubredoxin operon (178 aa).

Positions 3–163 constitute a Thioredoxin domain; that stretch reads RLVGKPAPEF…TLRVLKAFQT (161 aa). Catalysis depends on Cys-50, which acts as the Cysteine sulfenic acid (-SOH) intermediate.

Belongs to the peroxiredoxin family. AhpC/Prx1 subfamily. In terms of assembly, homodimer; disulfide-linked, upon oxidation.

It is found in the cytoplasm. It carries out the reaction a hydroperoxide + [protein]-dithiol = [protein]-disulfide + an alcohol + H2O. Functionally, thiol-specific peroxidase that catalyzes the reduction of hydrogen peroxide and organic hydroperoxides to water and alcohols, respectively. Plays a role in cell protection against oxidative stress by detoxifying peroxides. This chain is Putative peroxiredoxin in rubredoxin operon, found in Clostridium pasteurianum.